The sequence spans 71 residues: Small ribosomal subunit protein bS21 (71 aa).

The segment at 43 to 71 (TERKRAKASAVKRHAKKLARENARRTRLY) is disordered. The span at 46–59 (KRAKASAVKRHAKK) shows a compositional bias: basic residues. Over residues 60 to 71 (LARENARRTRLY) the composition is skewed to basic and acidic residues.

The protein belongs to the bacterial ribosomal protein bS21 family.

In Edwardsiella ictaluri (strain 93-146), this protein is Small ribosomal subunit protein bS21.